We begin with the raw amino-acid sequence, 101 residues long: Small ribosomal subunit protein uS14 (101 aa).

Residues 1-22 (MAKVSSIKKNESRKKKSQSLHN) are disordered. Basic residues predominate over residues 11 to 22 (ESRKKKSQSLHN).

The protein belongs to the universal ribosomal protein uS14 family. As to quaternary structure, part of the 30S ribosomal subunit. Contacts proteins S3 and S10.

Binds 16S rRNA, required for the assembly of 30S particles and may also be responsible for determining the conformation of the 16S rRNA at the A site. This chain is Small ribosomal subunit protein uS14, found in Rickettsia conorii (strain ATCC VR-613 / Malish 7).